The primary structure comprises 536 residues: MLLLWVSVVAALALAVLAPGAGEQRRRAAKAPNVVLVVSDSFDGRLTFHPGSQVVKLPFINFMKTRGTSFLNAYTNSPICCPSRAAMWSGLFTHLTESWNNFKGLDPNYTTWMDVMERHGYRTQKFGKLDYTSGHHSISNRVEAWTRDVAFLLRQEGRPMVNLIRNRTKVRVMERDWQNTDKAVNWLRKEAINYTEPFVIYLGLNLPHPYPSPSSGENFGSSTFHTSLYWLEKVSHDAIKIPKWSPLSEMHPVDYYSSYTKNCTGRFTKKEIKNIRAFYYAMCAETDAMLGEIILALHQLDLLQKTIVIYSSDHGELAMEHRQFYKMSMYEASAHVPLLMMGPGIKAGLQVSNVVSLVDIYPTMLDIAGIPLPQNLSGYSLLPLSSETFKNEHKVKNLHPPWILSEFHGCNVNASTYMLRTNHWKYIAYSDGASILPQLFDLSSDPDELTNVAVKFPEITYSLDQKLHSIINYPKVSASVHQYNKEQFIKWKQSIGQNYSNVIANLRWHQDWQKEPRKYENAIDQWLKTHMNPRAV.

Positions 1–22 (MLLLWVSVVAALALAVLAPGAG) are cleaved as a signal peptide. Residues Asp-40 and Cys-80 each coordinate Ca(2+). The Nucleophile role is filled by Cys-80. Cys-80 carries the post-translational modification 3-oxoalanine (Cys). N-linked (GlcNAc...) asparagine glycosylation is present at Asn-108. Lys-128 is a binding site for substrate. Residues Asn-166 and Asn-193 are each glycosylated (N-linked (GlcNAc...) asparagine). A substrate-binding site is contributed by His-251. The N-linked (GlcNAc...) asparagine glycan is linked to Asn-262. Asp-313 and His-314 together coordinate Ca(2+). N-linked (GlcNAc...) asparagine glycosylation is found at Asn-375, Asn-413, and Asn-498.

It belongs to the sulfatase family. Ca(2+) serves as cofactor. Post-translationally, the conversion to 3-oxoalanine (also known as C-formylglycine, FGly), of a serine or cysteine residue in prokaryotes and of a cysteine residue in eukaryotes, is critical for catalytic activity. In terms of processing, the 75-kDa precursor undergoes proteolytic processing to yield a 23 kDa form. N-glycosylated with both high mannose and complex type sugars. Expressed at high levels in the placenta and pancreas. Expressed at intermediate levels in the lung, brain, heart, liver and kidney and at low levels in the muscle.

The protein localises to the secreted. The protein resides in the lysosome. The enzyme catalyses an aryl sulfate + H2O = a phenol + sulfate + H(+). The catalysed reaction is Hydrolysis of the 2-sulfate groups of the 2-O-sulfo-D-glucuronate residues of chondroitin sulfate, heparin and heparitin sulfate.. Its function is as follows. Catalyzes the hydrolysis of pseudosubstrates such as p-nitrocatechol sulfate and p-nitrophenyl sulfate. Catalyzes the hydrolysis of the 2-sulfate groups of the 2-O-sulfo-D-glucuronate residues of chondroitin sulfate, heparin and heparitin sulfate. Acts selectively on 2-sulfoglucuronate and lacks activity against 2-sulfoiduronate. In Homo sapiens (Human), this protein is Arylsulfatase K (ARSK).